A 220-amino-acid polypeptide reads, in one-letter code: Probable pterin-4-alpha-carbinolamine dehydratase, chloroplastic (220 aa).

Residues 1–50 (MAATSSSPPCNISASSLLLRQPSRSILKVFGLLPPVSRNNRKLGRLTVTR) constitute a chloroplast transit peptide.

The protein belongs to the pterin-4-alpha-carbinolamine dehydratase family. In terms of assembly, interacts with SDIR1. Interacts with AIRP2. Post-translationally, ubiquitinated by SDIR1. Ubiquitination leads to its subsequent degradation, thus controlling abscisic acid (ABA) signaling. Ubiquitinated by AIRP2. Ubiquitination leads to its subsequent degradation, thus controlling abscisic acid (ABA) signaling during drought stress.

Its subcellular location is the plastid. The protein localises to the chloroplast. The protein resides in the cell membrane. It localises to the nucleus. The catalysed reaction is (4aS,6R)-4a-hydroxy-L-erythro-5,6,7,8-tetrahydrobiopterin = (6R)-L-erythro-6,7-dihydrobiopterin + H2O. Functionally, involved in tetrahydrobiopterin biosynthesis. Interacts with and acts downstream of the E3 ubiquitin-protein ligase SDIR1 in abscisic acid (ABA) and salt stress signaling. Regulates the expression of the bZIP transcription factor ABI5, which mediates responses to ABA during seed germination and salt stress. The SDIR1-ATP1/SDIRIP1 complex plays an important role in ABA signaling through the ubiquitination pathway. Acts downstream of AIRP2 in regulation of ABA signaling during drought stress. The sequence is that of Probable pterin-4-alpha-carbinolamine dehydratase, chloroplastic from Arabidopsis thaliana (Mouse-ear cress).